A 259-amino-acid chain; its full sequence is Phosphate import ATP-binding protein PstB (259 aa).

In terms of domain architecture, ABC transporter spans 11–254 (AEARNLNFYY…PQDKRTEDYI (244 aa)). 43 to 50 (GPSGCGKS) serves as a coordination point for ATP.

The protein belongs to the ABC transporter superfamily. Phosphate importer (TC 3.A.1.7) family. The complex is composed of two ATP-binding proteins (PstB), two transmembrane proteins (PstC and PstA) and a solute-binding protein (PstS).

It is found in the cell inner membrane. It carries out the reaction phosphate(out) + ATP + H2O = ADP + 2 phosphate(in) + H(+). Its function is as follows. Part of the ABC transporter complex PstSACB involved in phosphate import. Responsible for energy coupling to the transport system. The polypeptide is Phosphate import ATP-binding protein PstB (Dechloromonas aromatica (strain RCB)).